The sequence spans 250 residues: UDP-2,3-diacylglucosamine hydrolase (250 aa).

Residues D8, H10, D41, N79, and H115 each coordinate Mn(2+). Residue 79–80 participates in substrate binding; sequence NH. Substrate is bound by residues D123, T165, K168, and H196. Mn(2+) contacts are provided by H196 and H198.

It belongs to the LpxH family. It depends on Mn(2+) as a cofactor.

It is found in the cell inner membrane. It catalyses the reaction UDP-2-N,3-O-bis[(3R)-3-hydroxytetradecanoyl]-alpha-D-glucosamine + H2O = 2-N,3-O-bis[(3R)-3-hydroxytetradecanoyl]-alpha-D-glucosaminyl 1-phosphate + UMP + 2 H(+). The protein operates within glycolipid biosynthesis; lipid IV(A) biosynthesis; lipid IV(A) from (3R)-3-hydroxytetradecanoyl-[acyl-carrier-protein] and UDP-N-acetyl-alpha-D-glucosamine: step 4/6. Functionally, hydrolyzes the pyrophosphate bond of UDP-2,3-diacylglucosamine to yield 2,3-diacylglucosamine 1-phosphate (lipid X) and UMP by catalyzing the attack of water at the alpha-P atom. Involved in the biosynthesis of lipid A, a phosphorylated glycolipid that anchors the lipopolysaccharide to the outer membrane of the cell. The protein is UDP-2,3-diacylglucosamine hydrolase of Blochmanniella pennsylvanica (strain BPEN).